We begin with the raw amino-acid sequence, 112 residues long: UPF0122 protein CPF_1968 (112 aa).

This sequence belongs to the UPF0122 family.

Functionally, might take part in the signal recognition particle (SRP) pathway. This is inferred from the conservation of its genetic proximity to ftsY/ffh. May be a regulatory protein. This Clostridium perfringens (strain ATCC 13124 / DSM 756 / JCM 1290 / NCIMB 6125 / NCTC 8237 / Type A) protein is UPF0122 protein CPF_1968.